Consider the following 278-residue polypeptide: Large ribosomal subunit protein uL2 (278 aa).

The segment at 226–278 (MNPIDHPHGGGEGKTAAGRHPVSPWGTPSKGSRTRKNKRTSNMIVRSRYSKKG) is disordered.

The protein belongs to the universal ribosomal protein uL2 family. In terms of assembly, part of the 50S ribosomal subunit. Forms a bridge to the 30S subunit in the 70S ribosome.

Functionally, one of the primary rRNA binding proteins. Required for association of the 30S and 50S subunits to form the 70S ribosome, for tRNA binding and peptide bond formation. It has been suggested to have peptidyltransferase activity; this is somewhat controversial. Makes several contacts with the 16S rRNA in the 70S ribosome. The polypeptide is Large ribosomal subunit protein uL2 (Nitrosomonas europaea (strain ATCC 19718 / CIP 103999 / KCTC 2705 / NBRC 14298)).